The sequence spans 294 residues: Lipoyl synthase (294 aa).

Cys-41, Cys-46, Cys-52, Cys-67, Cys-71, Cys-74, and Ser-281 together coordinate [4Fe-4S] cluster. Positions Phe-53–Thr-270 constitute a Radical SAM core domain.

This sequence belongs to the radical SAM superfamily. Lipoyl synthase family. [4Fe-4S] cluster is required as a cofactor.

It is found in the cytoplasm. The catalysed reaction is [[Fe-S] cluster scaffold protein carrying a second [4Fe-4S](2+) cluster] + N(6)-octanoyl-L-lysyl-[protein] + 2 oxidized [2Fe-2S]-[ferredoxin] + 2 S-adenosyl-L-methionine + 4 H(+) = [[Fe-S] cluster scaffold protein] + N(6)-[(R)-dihydrolipoyl]-L-lysyl-[protein] + 4 Fe(3+) + 2 hydrogen sulfide + 2 5'-deoxyadenosine + 2 L-methionine + 2 reduced [2Fe-2S]-[ferredoxin]. It functions in the pathway protein modification; protein lipoylation via endogenous pathway; protein N(6)-(lipoyl)lysine from octanoyl-[acyl-carrier-protein]: step 2/2. In terms of biological role, catalyzes the radical-mediated insertion of two sulfur atoms into the C-6 and C-8 positions of the octanoyl moiety bound to the lipoyl domains of lipoate-dependent enzymes, thereby converting the octanoylated domains into lipoylated derivatives. The polypeptide is Lipoyl synthase (Baumannia cicadellinicola subsp. Homalodisca coagulata).